The primary structure comprises 147 residues: Large ribosomal subunit protein uL15 (147 aa).

Basic and acidic residues predominate over residues 1-12 (MTLRLNDLKPAD). The disordered stretch occupies residues 1-61 (MTLRLNDLKP…GFEGGQTPMQ (61 aa)). Residues 23 to 33 (RGIGSGLGKTA) show a composition bias toward gly residues. Residues 34–47 (GRGHKGSFARKGGG) show a composition bias toward basic residues.

This sequence belongs to the universal ribosomal protein uL15 family. Part of the 50S ribosomal subunit.

In terms of biological role, binds to the 23S rRNA. The protein is Large ribosomal subunit protein uL15 of Xanthomonas oryzae pv. oryzae (strain MAFF 311018).